Reading from the N-terminus, the 292-residue chain is MPDKRTALDDAVAQLRSGMTIGIAGWGSRRKPMAFVRAILRSDVTDLTVVTYGGPDLGLLCSAGKVKRVYYGFVSLDSPPFYDPWFAHARTSGAIEAREMDEGMLRCGLQAAAQRLPFLPIRAGLGSSVPQFWAGELQTVTSPYPAPGGGYETLIAMPALRLDAAFAHLNLGDSHGNAAYTGIDPYFDDLFLMAAERRFLSVERIVATEELVKSVPPQALLVNRMMVDAIVEAPGGAHFTTAAPDYGRDEQFQRHYAEAASTQVGWQQFVHTYLSGTEADYQAAVHNFGASR.

Belongs to the 3-oxoacid CoA-transferase subunit A family. Heterotetramer composed of 2 IpdA subunits and 2 IpdB subunits.

The enzyme catalyses (3E)-2-(2-carboxylatoethyl)-3-methyl-6-oxocyclohex-1-ene-1-carboxyl-CoA + H2O = 6-methyl-3,7-dioxodecanedioyl-CoA. Its pathway is steroid metabolism; cholesterol degradation. In terms of biological role, involved in the final steps of cholesterol and steroid degradation. Opens the last steroid ring of cholesterol by catalyzing the hydrolysis of (3E)-2-(2-carboxylatoethyl)-3-methyl-6-oxocyclohex-1-ene-1-carboxyl-CoA (COCHEA-CoA) to 6-methyl-3,7-dioxodecanedioyl-CoA (MeDODA-CoA). The protein is Cholesterol ring-cleaving hydrolase IpdA subunit of Mycobacterium tuberculosis (strain CDC 1551 / Oshkosh).